Reading from the N-terminus, the 260-residue chain is Acetylglutamate kinase (260 aa).

Residues Gly46–Gly47, Arg68, and Asn160 each bind substrate.

It belongs to the acetylglutamate kinase family. ArgB subfamily.

The protein resides in the cytoplasm. The catalysed reaction is N-acetyl-L-glutamate + ATP = N-acetyl-L-glutamyl 5-phosphate + ADP. The protein operates within amino-acid biosynthesis; L-arginine biosynthesis; N(2)-acetyl-L-ornithine from L-glutamate: step 2/4. Functionally, catalyzes the ATP-dependent phosphorylation of N-acetyl-L-glutamate. The chain is Acetylglutamate kinase from Shewanella sp. (strain W3-18-1).